We begin with the raw amino-acid sequence, 485 residues long: Glutamyl-tRNA(Gln) amidotransferase subunit A (485 aa).

Residues Lys-76 and Ser-151 each act as charge relay system in the active site. Catalysis depends on Ser-175, which acts as the Acyl-ester intermediate.

Belongs to the amidase family. GatA subfamily. In terms of assembly, heterotrimer of A, B and C subunits.

The catalysed reaction is L-glutamyl-tRNA(Gln) + L-glutamine + ATP + H2O = L-glutaminyl-tRNA(Gln) + L-glutamate + ADP + phosphate + H(+). In terms of biological role, allows the formation of correctly charged Gln-tRNA(Gln) through the transamidation of misacylated Glu-tRNA(Gln) in organisms which lack glutaminyl-tRNA synthetase. The reaction takes place in the presence of glutamine and ATP through an activated gamma-phospho-Glu-tRNA(Gln). The polypeptide is Glutamyl-tRNA(Gln) amidotransferase subunit A (Methylococcus capsulatus (strain ATCC 33009 / NCIMB 11132 / Bath)).